The sequence spans 478 residues: NADH-ubiquinone oxidoreductase 49 kDa subunit, mitochondrial (478 aa).

Residues 1–42 (MATTLFRLAGRNAKRHCMRQSTTIAHNLNSTRAFSASALRRY) constitute a mitochondrion transit peptide. Positions 341, 347, and 362 each coordinate [4Fe-4S] cluster.

The protein belongs to the complex I 49 kDa subunit family. In terms of assembly, complex I is composed of about 40 different subunits. Requires [4Fe-4S] cluster as cofactor.

The protein resides in the mitochondrion inner membrane. The catalysed reaction is a ubiquinone + NADH + 5 H(+)(in) = a ubiquinol + NAD(+) + 4 H(+)(out). In terms of biological role, core subunit of the mitochondrial membrane respiratory chain NADH dehydrogenase (Complex I) that is believed to belong to the minimal assembly required for catalysis. Complex I functions in the transfer of electrons from NADH to the respiratory chain. The immediate electron acceptor for the enzyme is believed to be ubiquinone. This chain is NADH-ubiquinone oxidoreductase 49 kDa subunit, mitochondrial (nuo-49), found in Neurospora crassa (strain ATCC 24698 / 74-OR23-1A / CBS 708.71 / DSM 1257 / FGSC 987).